The sequence spans 194 residues: Xanthine phosphoribosyltransferase (194 aa).

Xanthine contacts are provided by leucine 20 and asparagine 27. Residue 128–132 (ANGCA) participates in 5-phospho-alpha-D-ribose 1-diphosphate binding. Lysine 156 provides a ligand contact to xanthine.

Belongs to the purine/pyrimidine phosphoribosyltransferase family. Xpt subfamily. In terms of assembly, homodimer.

The protein localises to the cytoplasm. It catalyses the reaction XMP + diphosphate = xanthine + 5-phospho-alpha-D-ribose 1-diphosphate. It functions in the pathway purine metabolism; XMP biosynthesis via salvage pathway; XMP from xanthine: step 1/1. In terms of biological role, converts the preformed base xanthine, a product of nucleic acid breakdown, to xanthosine 5'-monophosphate (XMP), so it can be reused for RNA or DNA synthesis. The protein is Xanthine phosphoribosyltransferase of Lachnoclostridium phytofermentans (strain ATCC 700394 / DSM 18823 / ISDg) (Clostridium phytofermentans).